Here is a 65-residue protein sequence, read N- to C-terminus: MKLKTKSSVKKRFNLTAKGKVISAQSGKRHGMVKRSKSNIRNQRGTTVLGKSDSRIVKLYIPYGI.

This sequence belongs to the bacterial ribosomal protein bL35 family.

The polypeptide is Large ribosomal subunit protein bL35 (Wolbachia sp. subsp. Brugia malayi (strain TRS)).